A 162-amino-acid polypeptide reads, in one-letter code: Caveolin-2 (162 aa).

The Cytoplasmic segment spans residues 1 to 86 (MGLETEKADV…FEISKYVMYK (86 aa)). The residue at position 19 (Tyr-19) is a Phosphotyrosine; by SRC. Residues Ser-20 and Ser-23 each carry the phosphoserine modification. Residue Tyr-27 is modified to Phosphotyrosine; by SRC. Residue Ser-36 is modified to Phosphoserine. An intramembrane region (helical) is located at residues 87–107 (FLTVFLAIPLAFIAGILFATL). Residues 108–162 (SCLHIWILMPFVKTCLMVLPSVQTIWKSVTDVFIAPLCTSVGRSFSSVSLQLSQD) are Cytoplasmic-facing.

The protein belongs to the caveolin family. Monomer or homodimer. Interacts with CAV1; the interaction forms a stable heterooligomeric complex that is required for targeting to lipid rafts and for caveolae formation. Tyrosine phosphorylated forms do not form heterooligomers with the Tyr-19-phosphorylated form existing as a monomer or dimer, and the Tyr-27-form as a monomer only. Interacts (tyrosine phosphorylated form) with the SH2 domain-containing proteins, RASA1, NCK1 and SRC. Interacts (tyrosine phosphorylated form) with INSR, the interaction (Tyr-27-phosphorylated form) is increased on insulin stimulation. Interacts (Tyr-19 phosphorylated form) with MAPK1 (phosphorylated form); the interaction, promoted by insulin, leads to nuclear location and MAPK1 activation. Interacts with STAT3; the interaction is increased on insulin-induced tyrosine phosphorylation leading to STAT activation. Post-translationally, phosphorylated on serine and tyrosine residues. CAV1 promotes phosphorylation on Ser-23 which then targets the complex to the plasma membrane, lipid rafts and caveolae. Phosphorylation on Ser-36 appears to modulate mitosis in endothelial cells. Phosphorylation on both Tyr-19 and Tyr-27 is required for insulin-induced 'Ser-727' phosphorylation of STAT3 and its activation. Phosphorylation on Tyr-19 is required for insulin-induced phosphorylation of MAPK1 and DNA binding of STAT3. Tyrosine phosphorylation is induced by both EGF and insulin (By. similarity).

Its subcellular location is the nucleus. The protein resides in the cytoplasm. The protein localises to the golgi apparatus membrane. It is found in the cell membrane. It localises to the membrane. Its subcellular location is the caveola. Functionally, may act as a scaffolding protein within caveolar membranes. Interacts directly with G-protein alpha subunits and can functionally regulate their activity. Acts as an accessory protein in conjunction with CAV1 in targeting to lipid rafts and driving caveolae formation. The Ser-36 phosphorylated form has a role in modulating mitosis in endothelial cells. Positive regulator of cellular mitogenesis of the MAPK signaling pathway. Required for the insulin-stimulated nuclear translocation and activation of MAPK1 and STAT3, and the subsequent regulation of cell cycle progression. This Chlorocebus aethiops (Green monkey) protein is Caveolin-2 (CAV2).